A 231-amino-acid chain; its full sequence is Uracil-DNA glycosylase (231 aa).

Asp74 acts as the Proton acceptor in catalysis.

This sequence belongs to the uracil-DNA glycosylase (UDG) superfamily. UNG family.

The protein resides in the cytoplasm. The catalysed reaction is Hydrolyzes single-stranded DNA or mismatched double-stranded DNA and polynucleotides, releasing free uracil.. Its function is as follows. Excises uracil residues from the DNA which can arise as a result of misincorporation of dUMP residues by DNA polymerase or due to deamination of cytosine. The polypeptide is Uracil-DNA glycosylase (Campylobacter jejuni subsp. jejuni serotype O:2 (strain ATCC 700819 / NCTC 11168)).